A 361-amino-acid chain; its full sequence is Chorismate synthase (361 aa).

NADP(+) contacts are provided by arginine 48 and arginine 54. FMN-binding positions include arginine 125 to serine 127, asparagine 238 to alanine 239, glycine 278, lysine 293 to serine 297, and arginine 319.

It belongs to the chorismate synthase family. In terms of assembly, homotetramer. It depends on FMNH2 as a cofactor.

It carries out the reaction 5-O-(1-carboxyvinyl)-3-phosphoshikimate = chorismate + phosphate. It participates in metabolic intermediate biosynthesis; chorismate biosynthesis; chorismate from D-erythrose 4-phosphate and phosphoenolpyruvate: step 7/7. In terms of biological role, catalyzes the anti-1,4-elimination of the C-3 phosphate and the C-6 proR hydrogen from 5-enolpyruvylshikimate-3-phosphate (EPSP) to yield chorismate, which is the branch point compound that serves as the starting substrate for the three terminal pathways of aromatic amino acid biosynthesis. This reaction introduces a second double bond into the aromatic ring system. This Vibrio campbellii (strain ATCC BAA-1116) protein is Chorismate synthase.